A 398-amino-acid polypeptide reads, in one-letter code: S-adenosylmethionine synthase (398 aa).

An ATP-binding site is contributed by histidine 16. Position 18 (aspartate 18) interacts with Mg(2+). Glutamate 51 provides a ligand contact to K(+). L-methionine is bound by residues glutamate 64 and glutamine 108. The flexible loop stretch occupies residues 108 to 118 (QSADIAQGVDA). Residues 176–178 (DSK), 242–243 (KF), aspartate 251, 257–258 (RK), alanine 274, and lysine 278 each bind ATP. Aspartate 251 is a binding site for L-methionine. Lysine 282 is an L-methionine binding site.

The protein belongs to the AdoMet synthase family. As to quaternary structure, homotetramer; dimer of dimers. Requires Mg(2+) as cofactor. The cofactor is K(+).

The protein resides in the cytoplasm. The enzyme catalyses L-methionine + ATP + H2O = S-adenosyl-L-methionine + phosphate + diphosphate. Its pathway is amino-acid biosynthesis; S-adenosyl-L-methionine biosynthesis; S-adenosyl-L-methionine from L-methionine: step 1/1. Catalyzes the formation of S-adenosylmethionine (AdoMet) from methionine and ATP. The overall synthetic reaction is composed of two sequential steps, AdoMet formation and the subsequent tripolyphosphate hydrolysis which occurs prior to release of AdoMet from the enzyme. In Bradyrhizobium diazoefficiens (strain JCM 10833 / BCRC 13528 / IAM 13628 / NBRC 14792 / USDA 110), this protein is S-adenosylmethionine synthase.